The chain runs to 485 residues: ATP synthase subunit beta (485 aa).

Gly158–Thr165 contacts ATP.

The protein belongs to the ATPase alpha/beta chains family. In terms of assembly, F-type ATPases have 2 components, CF(1) - the catalytic core - and CF(0) - the membrane proton channel. CF(1) has five subunits: alpha(3), beta(3), gamma(1), delta(1), epsilon(1). CF(0) has four main subunits: a(1), b(1), b'(1) and c(9-12).

The protein resides in the cell inner membrane. The enzyme catalyses ATP + H2O + 4 H(+)(in) = ADP + phosphate + 5 H(+)(out). Its function is as follows. Produces ATP from ADP in the presence of a proton gradient across the membrane. The catalytic sites are hosted primarily by the beta subunits. The protein is ATP synthase subunit beta of Erythrobacter litoralis (strain HTCC2594).